A 338-amino-acid chain; its full sequence is Aspartate carbamoyltransferase catalytic subunit (338 aa).

2 residues coordinate carbamoyl phosphate: R71 and T72. K99 contacts L-aspartate. Carbamoyl phosphate-binding residues include R121, H151, and Q154. Positions 184 and 239 each coordinate L-aspartate. Residues G280 and P281 each coordinate carbamoyl phosphate.

This sequence belongs to the aspartate/ornithine carbamoyltransferase superfamily. ATCase family. Heterododecamer (2C3:3R2) of six catalytic PyrB chains organized as two trimers (C3), and six regulatory PyrI chains organized as three dimers (R2).

It catalyses the reaction carbamoyl phosphate + L-aspartate = N-carbamoyl-L-aspartate + phosphate + H(+). Its pathway is pyrimidine metabolism; UMP biosynthesis via de novo pathway; (S)-dihydroorotate from bicarbonate: step 2/3. Its function is as follows. Catalyzes the condensation of carbamoyl phosphate and aspartate to form carbamoyl aspartate and inorganic phosphate, the committed step in the de novo pyrimidine nucleotide biosynthesis pathway. In Stutzerimonas stutzeri (strain A1501) (Pseudomonas stutzeri), this protein is Aspartate carbamoyltransferase catalytic subunit.